Reading from the N-terminus, the 330-residue chain is ADP-L-glycero-D-manno-heptose-6-epimerase (330 aa).

NADP(+)-binding positions include 11-12 (FI), 32-33 (DD), Q39, Q54, 75-79 (QGACA), and N92. Catalysis depends on Y139, which acts as the Proton acceptor. K143 provides a ligand contact to NADP(+). N168 is a substrate binding site. NADP(+)-binding residues include V169 and K177. The Proton acceptor role is filled by K177. Substrate-binding positions include R179, H186, 200–203 (FGEH), R213, and Y292.

This sequence belongs to the NAD(P)-dependent epimerase/dehydratase family. HldD subfamily. Homopentamer. Requires NADP(+) as cofactor.

The catalysed reaction is ADP-D-glycero-beta-D-manno-heptose = ADP-L-glycero-beta-D-manno-heptose. Its pathway is nucleotide-sugar biosynthesis; ADP-L-glycero-beta-D-manno-heptose biosynthesis; ADP-L-glycero-beta-D-manno-heptose from D-glycero-beta-D-manno-heptose 7-phosphate: step 4/4. In terms of biological role, catalyzes the interconversion between ADP-D-glycero-beta-D-manno-heptose and ADP-L-glycero-beta-D-manno-heptose via an epimerization at carbon 6 of the heptose. This Pseudomonas aeruginosa (strain UCBPP-PA14) protein is ADP-L-glycero-D-manno-heptose-6-epimerase.